We begin with the raw amino-acid sequence, 363 residues long: S-methylmethionine--homocysteine S-methyltransferase BHMT2 (363 aa).

The Hcy-binding domain occupies 11 to 305 (KGILERLDSG…YHIRAIAEEL (295 aa)). Residues Cys-208, Cys-290, and Cys-291 each contribute to the Zn(2+) site. A Phosphoserine modification is found at Ser-321.

Homotetramer. Zn(2+) serves as cofactor. Expressed in fetal heart, lung, liver, kidney and eye.

It carries out the reaction S-methyl-L-methionine + L-homocysteine = 2 L-methionine + H(+). It functions in the pathway amino-acid biosynthesis; L-methionine biosynthesis via de novo pathway; L-methionine from L-homocysteine (BhmT route): step 1/1. Functionally, involved in the regulation of homocysteine metabolism. Converts homocysteine to methionine using S-methylmethionine (SMM) as a methyl donor. The sequence is that of S-methylmethionine--homocysteine S-methyltransferase BHMT2 (Bhmt2) from Mus musculus (Mouse).